A 491-amino-acid chain; its full sequence is Proline--tRNA ligase (491 aa).

The protein belongs to the class-II aminoacyl-tRNA synthetase family. ProS type 3 subfamily. In terms of assembly, homodimer.

It localises to the cytoplasm. The enzyme catalyses tRNA(Pro) + L-proline + ATP = L-prolyl-tRNA(Pro) + AMP + diphosphate. Its function is as follows. Catalyzes the attachment of proline to tRNA(Pro) in a two-step reaction: proline is first activated by ATP to form Pro-AMP and then transferred to the acceptor end of tRNA(Pro). The chain is Proline--tRNA ligase from Halorubrum lacusprofundi (strain ATCC 49239 / DSM 5036 / JCM 8891 / ACAM 34).